Consider the following 258-residue polypeptide: MKQLYWYTCGEGDCDLVLLHGWGLNSGVWHCIIDRLAPHFRLHLVDLPGYGRSQDYGAMSLADMAERVAQQAPKQALWLGWSMGGLVASQIALSQPECVRGLITVSSSPCFTARDEWPGIKPEVLAGFQHQLSDDFHRTVERFLALQTLGTESSRQDARLLKSVVLQHQMPDVEVLTGGLAILRTADLRTALAGFTLPFMRVYGHLDSLVPRKVASLLDSAWPQTQSVVMQGAAHAPFISHPNDFAKLILNFAEENKK.

Residues 16 to 242 (LVLLHGWGLN…AAHAPFISHP (227 aa)) form the AB hydrolase-1 domain. Substrate is bound by residues Trp-22, 82–83 (SM), and 143–147 (FLALQ). Ser-82 serves as the catalytic Nucleophile. Residues Asp-207 and His-235 contribute to the active site. His-235 serves as a coordination point for substrate.

This sequence belongs to the AB hydrolase superfamily. Carboxylesterase BioH family. As to quaternary structure, monomer.

It localises to the cytoplasm. It catalyses the reaction 6-carboxyhexanoyl-[ACP] methyl ester + H2O = 6-carboxyhexanoyl-[ACP] + methanol + H(+). Its pathway is cofactor biosynthesis; biotin biosynthesis. Functionally, the physiological role of BioH is to remove the methyl group introduced by BioC when the pimeloyl moiety is complete. It allows to synthesize pimeloyl-ACP via the fatty acid synthetic pathway through the hydrolysis of the ester bonds of pimeloyl-ACP esters. This chain is Pimeloyl-[acyl-carrier protein] methyl ester esterase, found in Yersinia pseudotuberculosis serotype O:1b (strain IP 31758).